A 155-amino-acid polypeptide reads, in one-letter code: 3-hydroxyacyl-[acyl-carrier-protein] dehydratase FabZ (155 aa).

H57 is a catalytic residue.

This sequence belongs to the thioester dehydratase family. FabZ subfamily.

It is found in the cytoplasm. It catalyses the reaction a (3R)-hydroxyacyl-[ACP] = a (2E)-enoyl-[ACP] + H2O. Involved in unsaturated fatty acids biosynthesis. Catalyzes the dehydration of short chain beta-hydroxyacyl-ACPs and long chain saturated and unsaturated beta-hydroxyacyl-ACPs. This chain is 3-hydroxyacyl-[acyl-carrier-protein] dehydratase FabZ, found in Cereibacter sphaeroides (strain KD131 / KCTC 12085) (Rhodobacter sphaeroides).